A 248-amino-acid chain; its full sequence is Triosephosphate isomerase (248 aa).

A substrate-binding site is contributed by 9-11; it reads NWK. Histidine 94 serves as the catalytic Electrophile. Catalysis depends on glutamate 166, which acts as the Proton acceptor. Residues glycine 172, serine 212, and 233-234 contribute to the substrate site; that span reads GG.

This sequence belongs to the triosephosphate isomerase family. In terms of assembly, homodimer.

Its subcellular location is the cytoplasm. The enzyme catalyses D-glyceraldehyde 3-phosphate = dihydroxyacetone phosphate. It functions in the pathway carbohydrate biosynthesis; gluconeogenesis. The protein operates within carbohydrate degradation; glycolysis; D-glyceraldehyde 3-phosphate from glycerone phosphate: step 1/1. In terms of biological role, involved in the gluconeogenesis. Catalyzes stereospecifically the conversion of dihydroxyacetone phosphate (DHAP) to D-glyceraldehyde-3-phosphate (G3P). In Thermoanaerobacter pseudethanolicus (strain ATCC 33223 / 39E) (Clostridium thermohydrosulfuricum), this protein is Triosephosphate isomerase.